We begin with the raw amino-acid sequence, 125 residues long: Protein ApaG (125 aa).

Residues 1 to 125 (MINSPRVCIQ…FRLAVPTLIH (125 aa)) enclose the ApaG domain.

This Citrobacter koseri (strain ATCC BAA-895 / CDC 4225-83 / SGSC4696) protein is Protein ApaG.